Reading from the N-terminus, the 637-residue chain is DEAD-box ATP-dependent RNA helicase 37 (637 aa).

Disordered stretches follow at residues 1–68 (MRSS…QPSA) and 86–141 (GPAS…EEAT). Composition is skewed to low complexity over residues 10 to 28 (ANAEESAPATGAAPTPVAN) and 46 to 68 (GQAPTTTAAPAPAPGPAAVQPSA). Over residues 104–116 (GGRGGGGGGGGGW) the composition is skewed to gly residues. The Q motif motif lies at 174–202 (NTFAEIDLGDALNENIRRCKYVKPTPVQR). The 185-residue stretch at 205–389 (IPISIAGRDL…SDFLADYIFL (185 aa)) folds into the Helicase ATP-binding domain. 218–225 (AQTGSGKT) is an ATP binding site. Residues 333–336 (DEAD) carry the DEAD box motif. The region spanning 416–567 (YLMDLLHAQK…EVPQWLERYS (152 aa)) is the Helicase C-terminal domain. Positions 570 to 610 (SSFGGGGGRNRRSGGARFGGRDFRRDNRGGGGGGYGGGGGG) are disordered. The span at 588-597 (GGRDFRRDNR) shows a compositional bias: basic and acidic residues. The span at 598–610 (GGGGGGYGGGGGG) shows a compositional bias: gly residues.

Belongs to the DEAD box helicase family. DDX3/DED1 subfamily.

The enzyme catalyses ATP + H2O = ADP + phosphate + H(+). The protein is DEAD-box ATP-dependent RNA helicase 37 (PL10A) of Oryza sativa subsp. japonica (Rice).